The primary structure comprises 151 residues: Transcriptional repressor NrdR (151 aa).

The segment at 3–34 (CPFCNSVDTSVKNSRPSDCKMSVRRRRSCDSC) is a zinc-finger region. Positions 49–139 (VKVLKKDGSV…VYMNFSDVND (91 aa)) constitute an ATP-cone domain.

The protein belongs to the NrdR family. The cofactor is Zn(2+).

Its function is as follows. Negatively regulates transcription of bacterial ribonucleotide reductase nrd genes and operons by binding to NrdR-boxes. The polypeptide is Transcriptional repressor NrdR (Anaplasma marginale (strain Florida)).